The primary structure comprises 81 residues: uncharacterized protein (81 aa).

This is an uncharacterized protein from Autographa californica nuclear polyhedrosis virus (AcMNPV).